Reading from the N-terminus, the 313-residue chain is Ribosomal RNA small subunit methyltransferase H (313 aa).

S-adenosyl-L-methionine contacts are provided by residues 35–37 (GGH), aspartate 55, phenylalanine 79, aspartate 101, and glutamine 108.

This sequence belongs to the methyltransferase superfamily. RsmH family.

Its subcellular location is the cytoplasm. It catalyses the reaction cytidine(1402) in 16S rRNA + S-adenosyl-L-methionine = N(4)-methylcytidine(1402) in 16S rRNA + S-adenosyl-L-homocysteine + H(+). Its function is as follows. Specifically methylates the N4 position of cytidine in position 1402 (C1402) of 16S rRNA. This Escherichia coli O139:H28 (strain E24377A / ETEC) protein is Ribosomal RNA small subunit methyltransferase H.